A 683-amino-acid chain; its full sequence is Probable serine/threonine-protein kinase HAL5-like (683 aa).

Disordered stretches follow at residues 1–90 (MPQQ…VSDE) and 157–200 (YPQN…SKKA). Low complexity predominate over residues 36 to 48 (PSSAATSDSSEMS). A compositionally biased stretch (gly residues) spans 50 to 60 (AQGGRGNGLLG). The segment covering 69–85 (SPKSEAQFTQRNKSAES) has biased composition (polar residues). Residues 364–670 (GKCIGMIGQG…IPKLLDTPWM (307 aa)) form the Protein kinase domain. Residues 370–378 (IGQGAYGTV) and lysine 411 contribute to the ATP site. Aspartate 521 (proton acceptor) is an active-site residue.

Belongs to the protein kinase superfamily. CAMK Ser/Thr protein kinase family. NPR/HAL subfamily. HAL5 sub-subfamily.

The enzyme catalyses L-seryl-[protein] + ATP = O-phospho-L-seryl-[protein] + ADP + H(+). It carries out the reaction L-threonyl-[protein] + ATP = O-phospho-L-threonyl-[protein] + ADP + H(+). This is Probable serine/threonine-protein kinase HAL5-like from Eremothecium gossypii (strain ATCC 10895 / CBS 109.51 / FGSC 9923 / NRRL Y-1056) (Yeast).